We begin with the raw amino-acid sequence, 215 residues long: MSYTLPELGYAYNALEPHFDAQTMEIHHSKHHQAYVNNANAALEGLPAELVEMYPGHLISNLDKIPAEKRGALRNNAGGHTNHSLFWKSLKKGTTLQGALKDAIERDFGSVDAFKAEFEKAAATRFGSGWAWLVLTAEGKLAVVSTANQDNPLMGKEVAGCEGFPLLGLDVWEHAYYLKFQNRRPDYIKEFWNVVNWDFVAERFEQKTAHSNCAK.

Mn(2+) is bound by residues H27, H83, D170, and H174.

Belongs to the iron/manganese superoxide dismutase family. In terms of assembly, homodimer. Requires Mn(2+) as cofactor.

The catalysed reaction is 2 superoxide + 2 H(+) = H2O2 + O2. Functionally, destroys superoxide anion radicals which are normally produced within the cells and which are toxic to biological systems. This Haemophilus influenzae (strain ATCC 51907 / DSM 11121 / KW20 / Rd) protein is Superoxide dismutase [Mn] (sodA).